A 652-amino-acid polypeptide reads, in one-letter code: Iron-regulated outer membrane virulence protein (652 aa).

The N-terminal stretch at 1-25 (MSRFNPSPVSLSVTLGLMFSASAFA) is a signal peptide. Residues 33–40 (ETMVVTAA) carry the TonB box motif. The 118-residue stretch at 45–162 (VIQNAPASIS…IGGVINIITR (118 aa)) folds into the TBDR plug domain. In terms of domain architecture, TBDR beta-barrel spans 167-652 (QWSGNVQLST…RYWLGLDIAF (486 aa)). Positions 635–652 (YGYVEDGRRYWLGLDIAF) match the TonB C-terminal box motif.

The protein belongs to the TonB-dependent receptor family.

The protein localises to the cell outer membrane. Its function is as follows. Involved in the initial step of iron uptake by binding ferric vibriobactin, an iron chelatin siderophore that allows V.cholerae to extract iron from the environment. This chain is Iron-regulated outer membrane virulence protein (irgA), found in Vibrio cholerae serotype O1 (strain ATCC 39315 / El Tor Inaba N16961).